A 165-amino-acid chain; its full sequence is ATP synthase subunit b (165 aa).

A helical membrane pass occupies residues 5 to 25; it reads LVGITWEFVFQIVNTFIIFLL.

It belongs to the ATPase B chain family. As to quaternary structure, F-type ATPases have 2 components, F(1) - the catalytic core - and F(0) - the membrane proton channel. F(1) has five subunits: alpha(3), beta(3), gamma(1), delta(1), epsilon(1). F(0) has three main subunits: a(1), b(2) and c(10-14). The alpha and beta chains form an alternating ring which encloses part of the gamma chain. F(1) is attached to F(0) by a central stalk formed by the gamma and epsilon chains, while a peripheral stalk is formed by the delta and b chains.

It localises to the cell membrane. In terms of biological role, f(1)F(0) ATP synthase produces ATP from ADP in the presence of a proton or sodium gradient. F-type ATPases consist of two structural domains, F(1) containing the extramembraneous catalytic core and F(0) containing the membrane proton channel, linked together by a central stalk and a peripheral stalk. During catalysis, ATP synthesis in the catalytic domain of F(1) is coupled via a rotary mechanism of the central stalk subunits to proton translocation. Its function is as follows. Component of the F(0) channel, it forms part of the peripheral stalk, linking F(1) to F(0). The protein is ATP synthase subunit b of Clostridioides difficile (strain 630) (Peptoclostridium difficile).